The sequence spans 139 residues: Proline-rich nuclear receptor coactivator 2 (139 aa).

3 disordered regions span residues methionine 1–serine 51, asparagine 61–glycine 80, and alanine 89–proline 110. Composition is skewed to polar residues over residues alanine 11–methionine 36 and asparagine 61–serine 79. Positions serine 99–serine 105 match the SH3-binding motif. Positions proline 101–proline 110 are enriched in pro residues.

Belongs to the PNRC family. PNRC2 subfamily. Interacts with UPF1/RENT1; preferentially interacts with hyperphosphorylated form. Interacts with DCP1A. Interacts with many nuclear receptors including ESR1, ESRRA, ESRRG, NR3C1/GR, NR5A1, PGR, TR, RAR and RXR. As to expression, expressed in heart, lung, muscle and brain.

It is found in the nucleus. Its subcellular location is the cytoplasm. The protein resides in the P-body. In terms of biological role, involved in nonsense-mediated mRNA decay (NMD) by acting as a bridge between the mRNA decapping complex and the NMD machinery. May act by targeting the NMD machinery to the P-body and recruiting the decapping machinery to aberrant mRNAs. Required for UPF1/RENT1 localization to the P-body. Plays a role in glucocorticoid receptor-mediated mRNA degradation by interacting with the glucocorticoid receptor NR3C1 in a ligand-dependent manner when it is bound to the 5' UTR of target mRNAs and recruiting the RNA helicase UPF1 and the mRNA-decapping enzyme DCP1A, leading to RNA decay. Also acts as a nuclear receptor coactivator. May play a role in controlling the energy balance between energy storage and energy expenditure. The chain is Proline-rich nuclear receptor coactivator 2 (PNRC2) from Homo sapiens (Human).